A 541-amino-acid polypeptide reads, in one-letter code: Zinc finger protein 503 (541 aa).

A compositionally biased stretch (polar residues) spans 1 to 18 (MSNSPLGSGSRISHFTTE). 2 disordered regions span residues 1–49 (MSNS…QAGR) and 97–255 (TCSQ…SSSV). Positions 137 to 157 (AEDKSSFKPYSKHPDKKDQSA) are enriched in basic and acidic residues. Positions 236–255 (SLSAAPSPTPASSSSSSSSV) are enriched in low complexity. The C2H2-type zinc finger occupies 411–439 (HVCNWVSATGPCDKRFSSSEELLGHLRTH). Residues 474–511 (GASPGPLTLRSPHHHPLGLSSSRYHPYSKSPLPSGGAP) are disordered.

This sequence belongs to the Elbow/Noc family.

It is found in the nucleus. Its function is as follows. May function as a transcriptional repressor. This chain is Zinc finger protein 503 (znf503), found in Xenopus tropicalis (Western clawed frog).